We begin with the raw amino-acid sequence, 193 residues long: MNAIPYVVEQTKLGERSYDIYSRLLKDRIVIIGSEINDQVASSVVAQLLFLEAEDAEKDIFLYINSPGGSTTAGFAILDTMNLIKPDVQTLCMGFAASFGALLLLSGAKGKRFALPNSEIMIHQPLGGAQGQATEIEITAKRILKLKHDINKMIAEKTGQPIERVAHDTERDYFMTAEEAKAYGIVDDVVTKK.

The Nucleophile role is filled by serine 98. Histidine 123 is a catalytic residue.

Belongs to the peptidase S14 family. In terms of assembly, fourteen ClpP subunits assemble into 2 heptameric rings which stack back to back to give a disk-like structure with a central cavity, resembling the structure of eukaryotic proteasomes.

It is found in the cytoplasm. The enzyme catalyses Hydrolysis of proteins to small peptides in the presence of ATP and magnesium. alpha-casein is the usual test substrate. In the absence of ATP, only oligopeptides shorter than five residues are hydrolyzed (such as succinyl-Leu-Tyr-|-NHMec, and Leu-Tyr-Leu-|-Tyr-Trp, in which cleavage of the -Tyr-|-Leu- and -Tyr-|-Trp bonds also occurs).. In terms of biological role, cleaves peptides in various proteins in a process that requires ATP hydrolysis. Has a chymotrypsin-like activity. Plays a major role in the degradation of misfolded proteins. This is ATP-dependent Clp protease proteolytic subunit 1 from Bacillus anthracis.